We begin with the raw amino-acid sequence, 529 residues long: Putative amidohydrolase YtcJ (529 aa).

Belongs to the metallo-dependent hydrolases superfamily.

This is Putative amidohydrolase YtcJ (ytcJ) from Bacillus subtilis (strain 168).